Here is a 423-residue protein sequence, read N- to C-terminus: CinA-like protein (423 aa).

This sequence belongs to the CinA family.

This chain is CinA-like protein, found in Desulforapulum autotrophicum (strain ATCC 43914 / DSM 3382 / VKM B-1955 / HRM2) (Desulfobacterium autotrophicum).